Here is a 3013-residue protein sequence, read N- to C-terminus: Genome polyprotein (3013 aa).

N-acetylserine; by host is present on serine 2. An interaction with STAT1 region spans residues 2–23 (STLPKPQKRNQRNTNRRPQDVK). The tract at residues 2–58 (STLPKPQKRNQRNTNRRPQDVKFPGGGQIVGGVYLLPRRGPRLGVRATRKTSERSQP) is interaction with EIF2AK2/PKR. The tract at residues 2–59 (STLPKPQKRNQRNTNRRPQDVKFPGGGQIVGGVYLLPRRGPRLGVRATRKTSERSQPR) is interaction with DDX3X. The segment at 2 to 75 (STLPKPQKRN…PKARRQTGRT (74 aa)) is disordered. At 2–168 (STLPKPQKRN…EDGINYATGN (167 aa)) the chain is on the cytoplasmic side. 2 consecutive short sequence motifs (nuclear localization signal) follow at residues 5–13 (PKPQKRNQR) and 38–43 (PRRGPR). Positions 7 to 16 (PQKRNQRNTN) are enriched in basic residues. Low complexity predominate over residues 32–47 (GGVYLLPRRGPRLGVR). Serine 53 is modified (phosphoserine; by host). 2 consecutive short sequence motifs (nuclear localization signal) follow at residues 58–64 (PRGRRQP) and 66–71 (PKARRQ). Residues 58–72 (PRGRRQPIPKARRQT) show a composition bias toward basic residues. Serine 99 and serine 116 each carry phosphoserine; by host. The segment at 112–152 (PRRRSRNLGKVIDTLTCGFADLMGYIPVVGAPLGGVAAALA) is important for endoplasmic reticulum and mitochondrial localization. The interaction with APOA2 stretch occupies residues 122–173 (VIDTLTCGFADLMGYIPVVGAPLGGVAAALAHGVRAVEDGINYATGNLPGCS). Positions 164-167 (YATG) are important for lipid droplets localization. Residues 169–189 (LPGCSFSIFLLALLSCLTTPA) form a helical membrane-spanning segment. The propeptide at 178-191 (LLALLSCLTTPASA) is ER anchor for the core protein, removed in mature form by host signal peptidase. Over 190-358 (SAVHYANKSG…TGGHWGILAG (169 aa)) the chain is Lumenal. Asparagine 196, asparagine 209, asparagine 234, and asparagine 250 each carry an N-linked (GlcNAc...) asparagine; by host glycan. The important for fusion stretch occupies residues 265–296 (MVGAAAFCSAMYVGDLCGGIFLVGQLFSFNPR). A glycan (N-linked (GlcNAc...) asparagine; by host) is linked at asparagine 305. Residues 359–379 (ILYYSMVANWAKVLCILFLFA) traverse the membrane as a helical segment. Residues 380 to 723 (GVDATTRTTG…WEYVVLAFLL (344 aa)) lie on the Lumenal side of the membrane. The segment at 385-412 (TRTTGAQAARATLGFTGLFQTGAKQNIH) is HVR1. 3 N-linked (GlcNAc...) (high mannose) asparagine; by host glycosylation sites follow: asparagine 417, asparagine 423, and asparagine 430. 4 cysteine pairs are disulfide-bonded: cysteine 429–cysteine 553, cysteine 452–cysteine 459, cysteine 487–cysteine 495, and cysteine 504–cysteine 509. Asparagine 448 carries an N-linked (GlcNAc...) asparagine; by host glycan. Positions 475-479 (ANVSG) are HVR2. Residue asparagine 476 is glycosylated (N-linked (GlcNAc...) asparagine; by host). A CD81-binding 1 region spans residues 481–494 (SEDRPYCWHYAPRP). Asparagine 533 carries an N-linked (GlcNAc...) asparagine; by host glycan. The interval 545–552 (PPAGAWYG) is CD81-binding 2. Asparagine 557 carries N-linked (GlcNAc...) asparagine; by host glycosylation. 4 disulfide bridges follow: cysteine 565–cysteine 570, cysteine 579–cysteine 583, cysteine 595–cysteine 618, and cysteine 605–cysteine 642. N-linked (GlcNAc...) (high mannose) asparagine; by host glycans are attached at residues asparagine 621 and asparagine 643. Cysteine 650 and cysteine 675 are disulfide-bonded. A PKR/eIF2-alpha phosphorylation homology domain (PePHD) region spans residues 658-669 (IEMSPLLFSTTE). Residues 724–744 (LADARICACLWMVLLISQVEA) traverse the membrane as a helical segment. At 745–755 (ALENLIVLNAA) the chain is on the lumenal side. The helical transmembrane segment at 756-776 (SAASSQGWIYCLVFICCAWYI) threads the bilayer. Residues 777–780 (KGRV) lie on the Cytoplasmic side of the membrane. A helical membrane pass occupies residues 781–801 (VPGATYAILHLWPLLLLVLAL). At 802–811 (PQRAYAQDRE) the chain is on the lumenal side. The chain crosses the membrane as a helical span at residues 812-832 (QGASIGVVVIAAITIFTLTPA). At 833–879 (YKTMLVHFLWWNQYFIARSEALIQQWVPSLRVRGGRDAVILLTCLLH) the chain is on the cytoplasmic side. The helical transmembrane segment at 880 to 900 (PSLGFDITKMLLALLGPLYLL) threads the bilayer. At 901 to 926 (QVSLLRVPYYVRAHALLRVCILVRRV) the chain is on the lumenal side. The 124-residue stretch at 901–1024 (QVSLLRVPYY…DMKSMGWRLL (124 aa)) folds into the Peptidase C18 domain. The interval 902-1204 (VSLLRVPYYV…PVENMETTMR (303 aa)) is protease NS2-3. The S-palmitoyl cysteine; by host moiety is linked to residue cysteine 920. The helical transmembrane segment at 927–947 (AGGKYIQAALLKLGAWTGTYI) threads the bilayer. Residues 927 to 947 (AGGKYIQAALLKLGAWTGTYI) form an interaction with host SCPS1 region. Residues 948-1655 (YDHLAPLSTW…CMAADLEVIT (708 aa)) lie on the Cytoplasmic side of the membrane. Active-site for protease NS2 activity; shared with dimeric partner residues include histidine 950, glutamate 970, and cysteine 991. The region spanning 1025-1206 (APITAYCQQT…ENMETTMRSP (182 aa)) is the Peptidase S29 domain. Catalysis depends on charge relay system; for serine protease NS3 activity residues histidine 1081 and aspartate 1105. Cysteine 1121 and cysteine 1123 together coordinate Zn(2+). Serine 1163 (charge relay system; for serine protease NS3 activity) is an active-site residue. Zn(2+) is bound by residues cysteine 1169 and histidine 1173. The Helicase ATP-binding domain maps to 1215–1367 (PAVPQTYQVG…PNITETALPS (153 aa)). ATP is bound at residue 1228–1235 (APTGSGKS). Positions 1235 and 1315 each coordinate Mg(2+). Positions 1314–1317 (DECH) match the DECH box motif. Residues 1374 to 1536 (YGKAIPLECI…ELTPSETTVR (163 aa)) enclose the Helicase C-terminal domain. Positions 1484 to 1496 (QRRGRTGRGKPGV) are RNA-binding. The helical transmembrane segment at 1656–1676 (STWVLAGGIVAALAAYCLTVG) threads the bilayer. The NS3-binding stretch occupies residues 1677–1688 (SVVICGRIVTSG). Topologically, residues 1677–1803 (SVVICGRIVT…ALTSPLSTST (127 aa)) are cytoplasmic. A helical membrane pass occupies residues 1804–1824 (TLLLNILGGWVASQLAPPTAS). The Lumenal portion of the chain corresponds to 1825–1826 (TA). Residues 1827 to 1847 (FVVSGLAGAAVGSIGLGKVII) traverse the membrane as a helical segment. Residue aspartate 1848 is a topological domain, cytoplasmic. Residues 1849 to 1869 (ILAGYGAGVSGALVAFKIMSG) form a helical membrane-spanning segment. The Lumenal portion of the chain corresponds to 1870-1879 (EAPAVEDMVN). The helical transmembrane segment at 1880-1900 (LLPALLSPGALVVGVVCAAVL) threads the bilayer. Residues 1901–1970 (RRHVGPSEGA…WISGDWSAPC (70 aa)) are Cytoplasmic-facing. Cysteine 1970 carries the S-palmitoyl cysteine; by host lipid modification. Residues 1971-2000 (SCSWLKDVWDWVCTVLSDFKTWLRAKLVPT) lie within the membrane without spanning it. Topologically, residues 2001 to 2992 (LPGIPFISCQ…FHSVSRARPR (992 aa)) are cytoplasmic. Residues cysteine 2009, cysteine 2027, cysteine 2029, and cysteine 2050 each coordinate Zn(2+). Residues 2118–2206 (EFFTEVDGVR…ASSSASQLSA (89 aa)) are FKBP8-binding. Positions 2118–2331 (EFFTEVDGVR…PVPPPRKKRV (214 aa)) are transcriptional activation. Positions 2133 to 2137 (PPCRP) are interaction with non-structural protein 4A. Positions 2187–2440 (RLARGSPPSL…ALITPCAAEE (254 aa)) are interaction with host SKP2. Serine 2192, serine 2195, serine 2199, serine 2202, serine 2205, and serine 2208 each carry phosphoserine; by host. The segment at 2208–2247 (SLKATCTTAGKHPDAELIEANLLWRQEVGGNITRVESENK) is ISDR. Positions 2208–2273 (SLKATCTTAG…REISVGAECF (66 aa)) are interaction with EIF2AK2/PKR. The NS4B-binding stretch occupies residues 2247 to 2305 (KIIVLDSFDPLIAETDDREISVGAECFNPPRPKFPPALPVWARPDYNPPLLQPWKAPDY). The tract at residues 2298-2376 (QPWKAPDYEP…STLSSDMTPP (79 aa)) is V3. The segment at 2316–2411 (PPKGLPPVPP…PDLSSGSWST (96 aa)) is disordered. Residues 2321–2324 (PPVP) carry the SH3-binding motif. A Nuclear localization signal motif is present at residues 2326–2334 (PRKKRVVQL). A compositionally biased stretch (polar residues) spans 2347–2373 (AQTSFPPSTATLSEDSGRETSTLSSDM). Residues 2375–2385 (PPREEADRASD) are compositionally biased toward basic and acidic residues. At serine 2464 the chain carries Phosphoserine; by host. Residues 2636 to 2754 (PMGFSYDTRC…ISESMGVAED (119 aa)) form the RdRp catalytic domain. Mg(2+) is bound by residues aspartate 2642, aspartate 2740, and aspartate 2741. The chain crosses the membrane as a helical span at residues 2993 to 3013 (NLLLCLLLLTVGVGIFLLPAR).

This sequence belongs to the hepacivirus polyprotein family. Homooligomer. Interacts with E1 (via C-terminus). Interacts with the non-structural protein 5A. Interacts (via N-terminus) with host STAT1 (via SH2 domain); this interaction results in decreased STAT1 phosphorylation and ubiquitin-mediated proteasome-dependent STAT1 degradation, leading to decreased IFN-stimulated gene transcription. Interacts with host STAT3; this interaction constitutively activates STAT3. Interacts with host LTBR receptor. Interacts with host TNFRSF1A receptor and possibly induces apoptosis. Interacts with host HNRPK. Interacts with host YWHAE. Interacts with host UBE3A/E6AP. Interacts with host DDX3X. Interacts with host APOA2. Interacts with host RXRA protein. Interacts with host SP110 isoform 3/Sp110b; this interaction sequesters the transcriptional corepressor SP110 away from the nucleus. Interacts with host CREB3 nuclear transcription protein; this interaction triggers cell transformation. Interacts with host ACY3. Interacts with host C1QR1. Interacts with host RBM24; this interaction, which enhances the interaction of the mature core protein with 5'-UTR, may inhibit viral translation and favor replication. Interacts with host EIF2AK2/PKR; this interaction induces the autophosphorylation of EIF2AK2. Part of the viral assembly initiation complex composed of NS2, E1, E2, NS3, NS4A, NS5A and the mature core protein. In terms of assembly, forms a heterodimer with envelope glycoprotein E2. Interacts with mature core protein. Interacts with protease NS2. The heterodimer E1/E2 interacts with host CLDN1; this interaction plays a role in viral entry into host cell. Interacts with host SPSB2 (via C-terminus). Part of the viral assembly initiation complex composed of NS2, E1, E2, NS3, NS4A, NS5A and the mature core protein. Interacts with host NEURL3; this interaction prevents E1 binding to glycoprotein E2. As to quaternary structure, forms a heterodimer with envelope glycoprotein E1. Interacts with host CD81 and SCARB1 receptors; these interactions play a role in viral entry into host cell. Interacts with host EIF2AK2/PKR; this interaction inhibits EIF2AK2 and probably allows the virus to evade the innate immune response. Interacts with host CD209/DC-SIGN and CLEC4M/DC-SIGNR. Interact with host SPCS1; this interaction is essential for viral particle assembly. Interacts with protease NS2. The heterodimer E1/E2 interacts with host CLDN1; this interaction plays a role in viral entry into host cell. Part of the viral assembly initiation complex composed of NS2, E1, E2, NS3, NS4A, NS5A and the mature core protein. Interacts with host SLC3A2/4F2hc; the interaction may facilitate viral entry into host cell. Interacts with human PLSCR1. Homohexamer. Homoheptamer. Interacts with protease NS2. In terms of assembly, homodimer. Interacts with host SPCS1; this interaction is essential for viral particle assembly. Interacts with envelope glycoprotein E1. Interacts with envelope glycoprotein E2. Interacts with viroporin p7. Interacts with serine protease/helicase NS3. Part of the replication complex composed of NS2, NS3, NS4A, NS4B, NS5A and the RNA-directed RNA polymerase embedded in an ER-derived membranous web. Part of the viral assembly initiation complex composed of NS2, E1, E2, NS3, NS4A, NS5A and the mature core protein. As to quaternary structure, interacts with protease NS2. Interacts with non-structural protein 4A; this interaction stabilizes the folding of NS3 serine protease. NS3-NS4A interaction is essential for NS3 activation and allows membrane anchorage of the latter. NS3/NS4A complex also prevents phosphorylation of host IRF3, thus preventing the establishment of dsRNA induced antiviral state. Interacts with host MAVS; this interaction leads to the cleavage and inhibition of host MAVS. Interacts with host TICAM1; this interaction leads to the cleavage and inhibition of host TICAM1. Interacts with host TANK-binding kinase/TBK1; this interaction results in the inhibition of the association between TBK1 and IRF3, which leads to the inhibition of IRF3 activation. Interacts with host RBM24. Part of the replication complex composed of NS2, NS3, NS4A, NS4B, NS5A and the RNA-directed RNA polymerase embedded in an ER-derived membranous web. Part of the viral assembly initiation complex composed of NS2, E1, E2, NS3, NS4A, NS5A and the mature core protein. Interacts with NS3 serine protease; this interaction stabilizes the folding of NS3 serine protease. NS3-NS4A interaction is essential for NS3 activation and allows membrane anchorage of the latter. Interacts with non-structural protein 5A (via N-terminus). Part of the replication complex composed of NS2, NS3, NS4A, NS4B, NS5A and the RNA-directed RNA polymerase embedded in an ER-derived membranous web. Part of the viral assembly initiation complex composed of NS2, E1, E2, NS3, NS4A, NS5A and the mature core protein. In terms of assembly, homomultimer. Interacts with non-structural protein NS5A. Interacts with host PLA2G4C; this interaction likely initiates the recruitment of replication complexes to lipid droplets. Interacts with host STING; this interaction disrupts the interaction between STING and TBK1 thereby suppressing the interferon signaling. Part of the replication complex composed of NS2, NS3, NS4A, NS4B, NS5A and the RNA-directed RNA polymerase embedded in an ER-derived membranous web. As to quaternary structure, monomer. Homodimer; dimerization is required for RNA-binding. Interacts with the mature core protein. Interacts (via N-terminus) with non-structural protein 4A. Interacts with non-structural protein 4B. Interacts (via region D2) with RNA-directed RNA polymerase. Part of the viral assembly initiation complex composed of NS2, E1, E2, NS3, NS4A, NS5A and the mature core protein. Part of the replication complex composed of NS2, NS3, NS4A, NS4B, NS5A and the RNA-directed RNA polymerase embedded in an ER-derived membranous web. Interacts with host GRB2. Interacts with host BIN1. Interacts with host PIK3R1. Interacts with host SRCAP. Interacts with host FKBP8. Interacts (via C-terminus) with host VAPB (via MSP domain). Interacts with host EIF2AK2/PKR; this interaction leads to disruption of EIF2AK2 dimerization by NS5A and probably allows the virus to evade the innate immune response. Interacts (via N-terminus) with host PACSIN2 (via N-terminus); this interaction attenuates protein kinase C alpha-mediated phosphorylation of PACSIN2 by disrupting the interaction between PACSIN2 and PRKCA. Interacts (via N-terminus) with host SRC kinase (via SH2 domain). Interacts with most Src-family kinases. Interacts with host IFI27 and SKP2; promotes the ubiquitin-mediated proteasomal degradation of NS5A. Interacts with host GPS2. Interacts with host TNFRSF21; this interaction allows the modulation by the virus of JNK, p38 MAPK, STAT3, and Akt signaling pathways in a DR6-dependent manner. Interacts (via N-terminus) with host CIDEB (via N-terminus); this interaction seems to regulate the association of HCV particles with APOE. Interacts with host CHKA/Choline Kinase-alpha; CHKA bridges host PI4KA and NS5A and potentiates NS5A-stimulated PI4KA activity, which then facilitates the targeting of the ternary complex to the ER for viral replication. Interacts with host SPSB2 (via C-terminus); this interaction targets NS5A for ubiquitination and degradation. Interacts with host RAB18; this interaction may promote the association of NS5A and other replicase components with lipid droplets. Interacts (via region D2) with host PPIA/CYPA; the interaction stimulates RNA-binding ability of NS5A and is dependent on the peptidyl-prolyl cis-trans isomerase activity of PPIA/CYPA. Interacts with host TRIM14; this interaction induces the degradation of NS5A. Homooligomer. Interacts with non-structural protein 5A. Interacts with host VAPB. Interacts with host PRK2/PKN2. Interacts with host HNRNPA1 and SEPT6; these interactions facilitate viral replication. Part of the replication complex composed of NS2, NS3, NS4A, NS4B, NS5A and the RNA-directed RNA polymerase. Zn(2+) serves as cofactor. Requires Mg(2+) as cofactor. In terms of processing, specific enzymatic cleavages in vivo yield mature proteins. The structural proteins, core, E1, E2 and p7 are produced by proteolytic processing by host signal peptidases. The core protein precursor is synthesized as a 23 kDa, which is retained in the ER membrane through the hydrophobic signal peptide. Cleavage by the signal peptidase releases the 21 kDa mature core protein. The cleavage of the core protein precursor occurs between aminoacids 176 and 188 but the exact cleavage site is not known. Some degraded forms of the core protein appear as well during the course of infection. The other proteins (p7, NS2, NS3, NS4A, NS4B, NS5A and NS5B) are cleaved by the viral proteases. Autoprocessing between NS2 and NS3 is mediated by the NS2 cysteine protease catalytic domain and regulated by the NS3 N-terminal domain. Phosphorylated by host PKC and PKA. Post-translationally, ubiquitinated; mediated by UBE3A and leading to core protein subsequent proteasomal degradation. In terms of processing, highly N-glycosylated. Palmitoylation is required for NS2/3 autoprocessing and E2 recruitment to membranes. Post-translationally, palmitoylated. This modification may play a role in its polymerization or in protein-protein interactions. In terms of processing, phosphorylated on serines in a basal form termed p56. p58 is a hyperphosphorylated form of p56. p56 and p58 coexist in the cell in roughly equivalent amounts. Hyperphosphorylation is dependent on the presence of NS4A. Host CSNK1A1/CKI-alpha or RPS6KB1 kinases may be responsible for NS5A phosphorylation. Tyrosine phosphorylation is essential for the interaction with host SRC. Post-translationally, the N-terminus is phosphorylated by host PRK2/PKN2.

Its subcellular location is the host endoplasmic reticulum membrane. It localises to the host mitochondrion membrane. The protein localises to the virion. It is found in the host cytoplasm. The protein resides in the host nucleus. Its subcellular location is the host lipid droplet. It localises to the virion membrane. The protein localises to the host mitochondrion. It is found in the host cell membrane. The protein resides in the host perinuclear region. It carries out the reaction Hydrolysis of four peptide bonds in the viral precursor polyprotein, commonly with Asp or Glu in the P6 position, Cys or Thr in P1 and Ser or Ala in P1'.. The enzyme catalyses a ribonucleoside 5'-triphosphate + H2O = a ribonucleoside 5'-diphosphate + phosphate + H(+). It catalyses the reaction ATP + H2O = ADP + phosphate + H(+). The catalysed reaction is RNA(n) + a ribonucleoside 5'-triphosphate = RNA(n+1) + diphosphate. With respect to regulation, inhibited by the antiviral drug hexamethylene amiloride. Inhibition by amantadine appears to be genotype-dependent. Also inhibited by long-alkyl-chain iminosugar derivatives. Its activity is regulated as follows. Activity is up-regulated by PRK2/PKN2-mediated phosphorylation. Its function is as follows. Packages viral RNA to form a viral nucleocapsid, and promotes virion budding. Participates in the viral particle production as a result of its interaction with the non-structural protein 5A. Binds RNA and may function as a RNA chaperone to induce the RNA structural rearrangements taking place during virus replication. Modulates viral translation initiation by interacting with viral IRES and 40S ribosomal subunit. Affects various cell signaling pathways, host immunity and lipid metabolism. Prevents the establishment of cellular antiviral state by blocking the interferon-alpha/beta (IFN-alpha/beta) and IFN-gamma signaling pathways and by blocking the formation of phosphorylated STAT1 and promoting ubiquitin-mediated proteasome-dependent degradation of STAT1. Activates STAT3 leading to cellular transformation. Regulates the activity of cellular genes, including c-myc and c-fos. May repress the promoter of p53, and sequester CREB3 and SP110 isoform 3/Sp110b in the cytoplasm. Represses cell cycle negative regulating factor CDKN1A, thereby interrupting an important check point of normal cell cycle regulation. Targets transcription factors involved in the regulation of inflammatory responses and in the immune response: suppresses TNF-induced NF-kappa-B activation, and activates AP-1. Binds to dendritic cells (DCs) via C1QR1, resulting in down-regulation of T-lymphocytes proliferation. Alters lipid metabolism by interacting with hepatocellular proteins involved in lipid accumulation and storage. Induces up-regulation of FAS promoter activity, and thereby contributes to the increased triglyceride accumulation in hepatocytes (steatosis). In terms of biological role, forms a heterodimer with envelope glycoprotein E2, which mediates virus attachment to the host cell, virion internalization through clathrin-dependent endocytosis and fusion with host membrane. Fusion with the host cell is most likely mediated by both E1 and E2, through conformational rearrangements of the heterodimer required for fusion rather than a classical class II fusion mechanism. E1/E2 heterodimer binds host apolipoproteins such as APOB and ApoE thereby forming a lipo-viro-particle (LVP). APOE associated to the LVP allows the initial virus attachment to cell surface receptors such as the heparan sulfate proteoglycans (HSPGs), syndecan-1 (SDC1), syndecan-1 (SDC2), the low-density lipoprotein receptor (LDLR) and scavenger receptor class B type I (SCARB1). The cholesterol transfer activity of SCARB1 allows E2 exposure and binding of E2 to SCARB1 and the tetraspanin CD81. E1/E2 heterodimer binding on CD81 activates the epithelial growth factor receptor (EGFR) signaling pathway. Diffusion of the complex E1-E2-EGFR-SCARB1-CD81 to the cell lateral membrane allows further interaction with Claudin 1 (CLDN1) and occludin (OCLN) to finally trigger HCV entry. Functionally, forms a heterodimer with envelope glycoprotein E1, which mediates virus attachment to the host cell, virion internalization through clathrin-dependent endocytosis and fusion with host membrane. Fusion with the host cell is most likely mediated by both E1 and E2, through conformational rearrangements of the heterodimer required for fusion rather than a classical class II fusion mechanism. The interaction between envelope glycoprotein E2 and host apolipoprotein E/APOE allows the proper assembly, maturation and infectivity of the viral particles. This interaction is probably promoted via the up-regulation of cellular autophagy by the virus. E1/E2 heterodimer binds host apolipoproteins such as APOB and APOE thereby forming a lipo-viro-particle (LVP). APOE associated to the LVP allows the initial virus attachment to cell surface receptors such as the heparan sulfate proteoglycans (HSPGs), syndecan-1 (SDC1), syndecan-1 (SDC2), the low-density lipoprotein receptor (LDLR) and scavenger receptor class B type I (SCARB1). The cholesterol transfer activity of SCARB1 allows E2 exposure and binding of E2 to SCARB1 and the tetraspanin CD81. E1/E2 heterodimer binding on CD81 activates the epithelial growth factor receptor (EGFR) signaling pathway. Diffusion of the complex E1-E2-EGFR-SCARB1-CD81 to the cell lateral membrane allows further interaction with Claudin 1 (CLDN1) and occludin (OCLN) to finally trigger HCV entry. Inhibits host EIF2AK2/PKR activation, preventing the establishment of an antiviral state. Viral ligand for CD209/DC-SIGN and CLEC4M/DC-SIGNR, which are respectively found on dendritic cells (DCs), and on liver sinusoidal endothelial cells and macrophage-like cells of lymph node sinuses. These interactions allow the capture of circulating HCV particles by these cells and subsequent facilitated transmission to permissive cells such as hepatocytes and lymphocyte subpopulations. The interaction between E2 and host amino acid transporter complex formed by SLC3A2 and SLC7A5/LAT1 may facilitate viral entry into host cell. Ion channel protein that acts as a viroporin and plays an essential role in the assembly, envelopment and secretion of viral particles. Regulates the host cell secretory pathway, which induces the intracellular retention of viral glycoproteins and favors assembly of viral particles. Creates a pore in acidic organelles and releases Ca(2+) and H(+) in the cytoplasm of infected cells, leading to a productive viral infection. High levels of cytoplasmic Ca(2+) may trigger membrane trafficking and transport of viral ER-associated proteins to viroplasms, sites of viral genome replication. This ionic imbalance induces the assembly of the inflammasome complex, which triggers the maturation of pro-IL-1beta into IL-1beta through the action of caspase-1. Targets also host mitochondria and induces mitochondrial depolarization. In addition of its role as a viroporin, acts as a lipid raft adhesion factor. Its function is as follows. Cysteine protease required for the proteolytic auto-cleavage between the non-structural proteins NS2 and NS3. The N-terminus of NS3 is required for the function of NS2 protease (active region NS2-3). Promotes the initiation of viral particle assembly by mediating the interaction between structural and non-structural proteins. In terms of biological role, displays three enzymatic activities: serine protease with a chymotrypsin-like fold, NTPase and RNA helicase. NS3 serine protease, in association with NS4A, is responsible for the cleavages of NS3-NS4A, NS4A-NS4B, NS4B-NS5A and NS5A-NS5B. The NS3/NS4A complex prevents phosphorylation of host IRF3, thus preventing the establishment of dsRNA induced antiviral state. The NS3/NS4A complex induces host amino acid transporter component SLC3A2, thus contributing to HCV propagation. NS3 RNA helicase binds to RNA and unwinds both dsDNA and dsRNA in the 3' to 5' direction, and likely resolves RNA complicated stable secondary structures in the template strand. Binds a single ATP and catalyzes the unzipping of a single base pair of dsRNA. Inhibits host antiviral proteins TBK1 and IRF3 thereby preventing the establishment of an antiviral state. Cleaves host MAVS/CARDIF thereby preventing the establishment of an antiviral state. Cleaves host TICAM1/TRIF, thereby disrupting TLR3 signaling and preventing the establishment of an antiviral state. Functionally, peptide cofactor which forms a non-covalent complex with the N-terminal of NS3 serine protease. The NS3/NS4A complex prevents phosphorylation of host IRF3, thus preventing the establishment of dsRNA induced antiviral state. The NS3/NS4A complex induces host amino acid transporter component SLC3A2, thus contributing to HCV propagation. Induces a specific membrane alteration that serves as a scaffold for the virus replication complex. This membrane alteration gives rise to the so-called ER-derived membranous web that contains the replication complex. NS4B self-interaction contributes to its function in membranous web formation. Promotes host TRIF protein degradation in a CASP8-dependent manner thereby inhibiting host TLR3-mediated interferon signaling. Disrupts the interaction between STING and TBK1 contributing to the inhibition of interferon signaling. Its function is as follows. Phosphorylated protein that is indispensable for viral replication and assembly. Both hypo- and hyperphosphorylated states are required for the viral life cycle. The hyperphosphorylated form of NS5A is an inhibitor of viral replication. Involved in RNA-binding and especially in binding to the viral genome. Zinc is essential for RNA-binding. Participates in the viral particle production as a result of its interaction with the mature viral core protein. Its interaction with host VAPB may target the viral replication complex to vesicles. Down-regulates viral IRES translation initiation. Mediates interferon resistance, presumably by interacting with and inhibiting host EIF2AK2/PKR. Prevents BIN1-induced apoptosis. Acts as a transcriptional activator of some host genes important for viral replication when localized in the nucleus. Via the interaction with host PACSIN2, modulates lipid droplet formation in order to promote virion assembly. Modulates TNFRSF21/DR6 signaling pathway for viral propagation. In terms of biological role, RNA-dependent RNA polymerase that performs primer-template recognition and RNA synthesis during viral replication. Initiates RNA transcription/replication at a flavin adenine dinucleotide (FAD), resulting in a 5'- FAD cap on viral RNAs. In this way, recognition of viral 5' RNA by host pattern recognition receptors can be bypassed, thereby evading activation of antiviral pathways. The protein is Genome polyprotein of Hepatitis C virus genotype 6d (isolate VN235) (HCV).